A 1193-amino-acid polypeptide reads, in one-letter code: Cysteine protease ATG4 (1193 aa).

Disordered regions lie at residues Ala-23–Ser-284 and Trp-358–Ser-474. The segment covering Asn-35–Lys-49 has biased composition (pro residues). The segment covering Gly-50–Ile-59 has biased composition (basic residues). Composition is skewed to basic and acidic residues over residues Leu-60–Ile-72, Ala-117–Ser-127, and Phe-140–Glu-153. Positions Ser-170 to Ser-185 are enriched in low complexity. Over residues Ala-186–Gln-205 the composition is skewed to polar residues. The segment covering Ser-227–Pro-238 has biased composition (low complexity). 3 stretches are compositionally biased toward polar residues: residues Gln-253–Arg-262, Gly-270–Ser-284, and Leu-389–Ser-447. The Nucleophile role is filled by Cys-570. Active-site residues include Asp-789 and His-791. Disordered stretches follow at residues His-807–Lys-869, Val-899–Ala-924, and Gln-1000–Asn-1171. The span at Arg-835–Ser-846 shows a compositional bias: low complexity. Acidic residues-rich tracts occupy residues Pro-1004–Glu-1029 and His-1070–Glu-1084. Composition is skewed to basic and acidic residues over residues Ile-1097–Gln-1112 and Pro-1152–Arg-1164.

Belongs to the peptidase C54 family.

It is found in the cytoplasm. The protein localises to the nucleus. The protein resides in the preautophagosomal structure. The catalysed reaction is [protein]-C-terminal L-amino acid-glycyl-phosphatidylethanolamide + H2O = [protein]-C-terminal L-amino acid-glycine + a 1,2-diacyl-sn-glycero-3-phosphoethanolamine. Functionally, cysteine protease that plays a key role in cytoplasm to vacuole transport (Cvt) and autophagy by mediating both proteolytic activation and delipidation of ATG8. Required for selective autophagic degradation of the nucleus (nucleophagy) as well as for mitophagy which contributes to regulate mitochondrial quantity and quality by eliminating the mitochondria to a basal level to fulfill cellular energy requirements and preventing excess ROS production. The protease activity is required for proteolytic activation of ATG8: cleaves the C-terminal amino acid of ATG8 to reveal a C-terminal glycine. ATG8 ubiquitin-like activity requires the exposure of the glycine at the C-terminus for its conjugation to phosphatidylethanolamine (PE) and its insertion to membranes, which is necessary for autophagy. The ATG8-PE conjugate mediates tethering between adjacent membranes and stimulates membrane hemifusion, leading to expansion of the autophagosomal membrane during autophagy. In addition to the protease activity, also catalyzes deconjugation of PE-conjugated forms of ATG8 during macroautophagy: ATG8 delipidation is required to release the protein from membranes, which facilitates multiple events during macroautophagy, and especially for efficient autophagosome biogenesis, the assembly of ATG9-containing tubulovesicular clusters into phagophores/autophagosomes, and for the disassembly of PAS-associated ATG components. ATG8 delipidation by ATG4 also recycles ATG8-PE generated on inappropriate membranes to maintain a reservoir of unlipidated ATG8 that is required for autophagosome formation at the PAS. This Cryptococcus neoformans var. neoformans serotype D (strain JEC21 / ATCC MYA-565) (Filobasidiella neoformans) protein is Cysteine protease ATG4 (ATG4).